The primary structure comprises 368 residues: Biglycan (368 aa).

Positions 1–16 (MKVLLLLCSCILVIHA) are cleaved as a signal peptide. The propeptide occupies 17-37 (LPFEQRGFWDFSMDDGMAMMK). Disulfide bonds link Cys-63-Cys-69 and Cys-67-Cys-76. LRR repeat units follow at residues 82–102 (TSIP…NNKI), 103–126 (TEIK…NNKI), 127–150 (SKIN…KNNL), 151–171 (EEIP…ENKI), 172–195 (KKVP…GNPL), 196–220 (ENGG…EAKL), 221–241 (SGIP…NNKI), 242–265 (QAIE…HNNI), 266–289 (RMIE…NNKL), 290–312 (SKVP…SNNI), 313–342 (TQVG…NNPV), and 343–368 (PYWE…NYRK). Asn-270 and Asn-311 each carry an N-linked (GlcNAc...) asparagine glycan. Cys-321 and Cys-354 are joined by a disulfide.

It belongs to the small leucine-rich proteoglycan (SLRP) family. SLRP class I subfamily.

It is found in the secreted. It localises to the extracellular space. Its subcellular location is the extracellular matrix. Its function is as follows. May be involved in collagen fiber assembly. The chain is Biglycan (bgn) from Xenopus laevis (African clawed frog).